A 222-amino-acid polypeptide reads, in one-letter code: Coiled-coil domain-containing protein 70 (222 aa).

Positions Asn-129 to Trp-153 form a coiled coil.

The protein is Coiled-coil domain-containing protein 70 of Homo sapiens (Human).